A 323-amino-acid polypeptide reads, in one-letter code: NADH-ubiquinone oxidoreductase chain 1 (323 aa).

A run of 8 helical transmembrane segments spans residues 4 to 24 (LFTVLELLSFLVPVLLAVAFL), 73 to 93 (YLFFLSPLLFMALALLLWNLM), 106 to 126 (LLLVLGLSSLSVYAILGSGWA), 150 to 170 (LALILLSLIIITSSFNLTYIM), 175 to 195 (FSWFALSCLPLFYIWFVSTLA), 226 to 246 (LFFIAEYANIILMNLFSVVIF), 256 to 276 (LFPLNVLTIGLKTTLLVFLFL), and 303 to 323 (IGALCATITIVLTLGIYLPLF).

Belongs to the complex I subunit 1 family.

It is found in the mitochondrion inner membrane. The catalysed reaction is a ubiquinone + NADH + 5 H(+)(in) = a ubiquinol + NAD(+) + 4 H(+)(out). Functionally, core subunit of the mitochondrial membrane respiratory chain NADH dehydrogenase (Complex I) that is believed to belong to the minimal assembly required for catalysis. Complex I functions in the transfer of electrons from NADH to the respiratory chain. The immediate electron acceptor for the enzyme is believed to be ubiquinone. This chain is NADH-ubiquinone oxidoreductase chain 1 (ND1), found in Paracentrotus lividus (Common sea urchin).